Reading from the N-terminus, the 523-residue chain is Cytochrome P450 52-N1 (523 aa).

Residues 5 to 25 traverse the membrane as a helical segment; that stretch reads AVLGAFAAFLLYMDVLYPFVI. C469 lines the heme pocket.

It belongs to the cytochrome P450 family. It depends on heme as a cofactor.

Its subcellular location is the membrane. The catalysed reaction is an omega-methyl-long-chain fatty acid + reduced [NADPH--hemoprotein reductase] + O2 = an omega-hydroxy-long-chain fatty acid + oxidized [NADPH--hemoprotein reductase] + H2O + H(+). It catalyses the reaction (9Z,12Z)-octadecadienoate + reduced [NADPH--hemoprotein reductase] + O2 = 18-hydroxy-(9Z,12Z)-octadecadienoate + oxidized [NADPH--hemoprotein reductase] + H2O + H(+). It carries out the reaction (9Z)-octadecenoate + reduced [NADPH--hemoprotein reductase] + O2 = 18-hydroxy-(9Z)-octadecenoate + oxidized [NADPH--hemoprotein reductase] + H2O + H(+). The enzyme catalyses hexadecanoate + reduced [NADPH--hemoprotein reductase] + O2 = 16-hydroxyhexadecanoate + oxidized [NADPH--hemoprotein reductase] + H2O + H(+). The catalysed reaction is (9Z)-hexadecenoate + reduced [NADPH--hemoprotein reductase] + O2 = (9Z)-16-hydroxyhexadec-9-enoate + oxidized [NADPH--hemoprotein reductase] + H2O + H(+). It catalyses the reaction octadecanoate + reduced [NADPH--hemoprotein reductase] + O2 = 18-hydroxyoctadecanoate + oxidized [NADPH--hemoprotein reductase] + H2O + H(+). Functionally, catalyzes the terminal (at the omega-position) hydroxylation of a fatty acid. Probably involved in alkane metabolism. Linoleic acid is the preferred substrate, but it acts on various other C-16, C-18 and C-20 saturated and unsaturated fatty acids, namely palmitic, palmitoleic, stearic, oleic, alpha-linoleic, arachidonic and myristic acid. The polypeptide is Cytochrome P450 52-N1 (Starmerella bombicola (Yeast)).